A 307-amino-acid polypeptide reads, in one-letter code: MTDSTYDVARVRTYLQGLQTRIADALGALDGTPLATDTWQRGPAERLRGGGCTRILEGGRVFERAGIGFSDVAGDALPPSASAARPQLAGRGFEALGVSLVLHPRNPYCPTVHMNVRMLIATKPGEAPVFWFGGGMDLTPVYGFEDDARHFHQTCKDALDPFGIELYPRFKQWCDEYFFLKHRNETRGIGGIFFDDFSEPGFERSFDLMQSVGDAFLHAYLPIVERRAELPYGERERDFQAYRRGRYVEFNLVFDRGTLFGLQSGGRTESILMSMPPVANWRYNWQPEPGSAEARLYSDFLVPRDWV.

Residue Ser99 participates in substrate binding. Residues His103 and His113 each contribute to the a divalent metal cation site. His113 (proton donor) is an active-site residue. Substrate is bound at residue Asn115–Arg117. A divalent metal cation contacts are provided by His152 and His182. An important for dimerization region spans residues Tyr247 to Arg282. Residue Gly265–Arg267 participates in substrate binding.

This sequence belongs to the aerobic coproporphyrinogen-III oxidase family. In terms of assembly, homodimer. Requires a divalent metal cation as cofactor.

It localises to the cytoplasm. The catalysed reaction is coproporphyrinogen III + O2 + 2 H(+) = protoporphyrinogen IX + 2 CO2 + 2 H2O. The protein operates within porphyrin-containing compound metabolism; protoporphyrin-IX biosynthesis; protoporphyrinogen-IX from coproporphyrinogen-III (O2 route): step 1/1. Its function is as follows. Involved in the heme biosynthesis. Catalyzes the aerobic oxidative decarboxylation of propionate groups of rings A and B of coproporphyrinogen-III to yield the vinyl groups in protoporphyrinogen-IX. This Burkholderia cenocepacia (strain ATCC BAA-245 / DSM 16553 / LMG 16656 / NCTC 13227 / J2315 / CF5610) (Burkholderia cepacia (strain J2315)) protein is Oxygen-dependent coproporphyrinogen-III oxidase.